The following is a 502-amino-acid chain: Lysine--tRNA ligase (502 aa).

The Mg(2+) site is built by Glu-403 and Glu-410.

Belongs to the class-II aminoacyl-tRNA synthetase family. As to quaternary structure, homodimer. Requires Mg(2+) as cofactor.

The protein localises to the cytoplasm. The catalysed reaction is tRNA(Lys) + L-lysine + ATP = L-lysyl-tRNA(Lys) + AMP + diphosphate. This chain is Lysine--tRNA ligase, found in Parasynechococcus marenigrum (strain WH8102).